A 450-amino-acid chain; its full sequence is uncharacterized protein (450 aa).

Residues 1 to 58 (MAKGEIVTVKIEEMDFKGYGVGYCEGKPLKVRGGILGQRVAVRVKKGKKGRAEGEIVE) enclose the TRAM domain. [4Fe-4S] cluster-binding residues include Cys71, Cys77, Cys80, and Cys159. Gln285, Tyr314, Glu335, and Asp380 together coordinate S-adenosyl-L-methionine. Residue Cys407 is the Nucleophile of the active site.

It belongs to the class I-like SAM-binding methyltransferase superfamily. RNA M5U methyltransferase family.

This is an uncharacterized protein from Caldanaerobacter subterraneus subsp. tengcongensis (strain DSM 15242 / JCM 11007 / NBRC 100824 / MB4) (Thermoanaerobacter tengcongensis).